The primary structure comprises 131 residues: Small ribosomal subunit protein uS8 (131 aa).

It belongs to the universal ribosomal protein uS8 family. In terms of assembly, part of the 30S ribosomal subunit. Contacts proteins S5 and S12.

One of the primary rRNA binding proteins, it binds directly to 16S rRNA central domain where it helps coordinate assembly of the platform of the 30S subunit. This Nitrosospira multiformis (strain ATCC 25196 / NCIMB 11849 / C 71) protein is Small ribosomal subunit protein uS8.